A 522-amino-acid chain; its full sequence is MPELTEFQKKRLENIKRNNDLLKKLHLSGVASQIKHEAGVLEKSRAPAKKKQKTTNTRATKSASPTLPTRRSRRLRGESADDVKGIPNVNDNQLLKMGSPDGQDKNFIDAIKEKPVIGDVKLSDLIKDEDESALLEKFKRFNNGNFSSGDFFEEIKKRQGDVTGMDEFDLDLYDVFQPNEIKITYERISATYFHPAMEKKLIIAGDTSGTVGFWNVRDEPLADSEEDRMEEPDITRVKLFTKNVGRIDCFPADTSKILLTSYDGSIRSVHLNNLQSEEVLTLKNEYDDSLGISDCQFSYENPNVLFLTTLGGEFTTFDTRVKKSEYNLRRLADKKIGSMAINPMRPYEIATGSLDRTLKIWDTRNLVKKPEWSQYEDYPSHEIVSTYDSRLSVSAVSYSPTDGTLVCNGYDDTIRLFDVKSRDHLSAKLEPKLTIQHNCQTGRWTSILKARFKPNKNVFAIANMKRAIDIYNSEGQQLAHLPTATVPAVISWHPLRNWIAGGNSSGKIFLFTDDSGTIKQEE.

Positions 38–100 are disordered; it reads AGVLEKSRAP…DNQLLKMGSP (63 aa). Over residues 54–63 the composition is skewed to polar residues; the sequence is TTNTRATKSA. Residue S64 is modified to Phosphoserine. Residue T69 is modified to Phosphothreonine. Residues 75–84 are compositionally biased toward basic and acidic residues; the sequence is LRGESADDVK. 7 WD repeats span residues 183–224, 239–281, 287–327, 331–371, 388–427, 442–481, and 482–521; these read ITYE…LADS, LFTK…EVLT, DDSL…SEYN, LADK…KKPE, DSRL…HLSA, GRWT…LAHL, and PTAT…IKQE. A Phosphoserine modification is found at S224.

The protein belongs to the WD repeat DDB2/WDR76 family.

The protein resides in the cytoplasm. Its subcellular location is the nucleus. In terms of biological role, DNA-binding protein that binds to both single- and double-stranded DNA. Binds preferentially to UV-damaged DNA in vitro. May be involved in DNA-metabolic processes. The polypeptide is DNA damage-binding protein CMR1 (Saccharomyces cerevisiae (strain ATCC 204508 / S288c) (Baker's yeast)).